The chain runs to 142 residues: Large ribosomal subunit protein bL17 (142 aa).

It belongs to the bacterial ribosomal protein bL17 family. In terms of assembly, part of the 50S ribosomal subunit. Contacts protein L32.

This chain is Large ribosomal subunit protein bL17, found in Wolbachia sp. subsp. Brugia malayi (strain TRS).